The chain runs to 141 residues: D-aminoacyl-tRNA deacylase (141 aa).

Positions 133–134 (GP) match the Gly-cisPro motif, important for rejection of L-amino acids motif.

Belongs to the DTD family. In terms of assembly, homodimer.

The protein localises to the cytoplasm. It catalyses the reaction glycyl-tRNA(Ala) + H2O = tRNA(Ala) + glycine + H(+). It carries out the reaction a D-aminoacyl-tRNA + H2O = a tRNA + a D-alpha-amino acid + H(+). An aminoacyl-tRNA editing enzyme that deacylates mischarged D-aminoacyl-tRNAs. Also deacylates mischarged glycyl-tRNA(Ala), protecting cells against glycine mischarging by AlaRS. Acts via tRNA-based rather than protein-based catalysis; rejects L-amino acids rather than detecting D-amino acids in the active site. By recycling D-aminoacyl-tRNA to D-amino acids and free tRNA molecules, this enzyme counteracts the toxicity associated with the formation of D-aminoacyl-tRNA entities in vivo and helps enforce protein L-homochirality. The sequence is that of D-aminoacyl-tRNA deacylase from Kineococcus radiotolerans (strain ATCC BAA-149 / DSM 14245 / SRS30216).